The following is a 202-amino-acid chain: Lipoprotein signal peptidase (202 aa).

Residues 1-29 (MPDEPTGSADPLTSTEEAGGAGEPNAPAP) are disordered. The next 3 membrane-spanning stretches (helical) occupy residues 35–55 (MLLS…VVAV), 88–108 (GYTW…FWMG), and 112–132 (VSPW…GNLV). Catalysis depends on residues aspartate 148 and aspartate 162. Residues 160 to 180 (VADPSVVGGAILLVILSIFGF) traverse the membrane as a helical segment.

This sequence belongs to the peptidase A8 family.

The protein localises to the cell membrane. It catalyses the reaction Release of signal peptides from bacterial membrane prolipoproteins. Hydrolyzes -Xaa-Yaa-Zaa-|-(S,diacylglyceryl)Cys-, in which Xaa is hydrophobic (preferably Leu), and Yaa (Ala or Ser) and Zaa (Gly or Ala) have small, neutral side chains.. It functions in the pathway protein modification; lipoprotein biosynthesis (signal peptide cleavage). Its function is as follows. This protein specifically catalyzes the removal of signal peptides from prolipoproteins. The polypeptide is Lipoprotein signal peptidase (Mycobacterium bovis (strain ATCC BAA-935 / AF2122/97)).